We begin with the raw amino-acid sequence, 274 residues long: 4-hydroxy-3-methylbut-2-enyl diphosphate reductase (274 aa).

Residue Cys12 participates in [4Fe-4S] cluster binding. (2E)-4-hydroxy-3-methylbut-2-enyl diphosphate contacts are provided by His36 and His70. The dimethylallyl diphosphate site is built by His36 and His70. Isopentenyl diphosphate contacts are provided by His36 and His70. Cys92 lines the [4Fe-4S] cluster pocket. His120 serves as a coordination point for (2E)-4-hydroxy-3-methylbut-2-enyl diphosphate. His120 contributes to the dimethylallyl diphosphate binding site. An isopentenyl diphosphate-binding site is contributed by His120. Residue Glu122 is the Proton donor of the active site. Position 158 (Thr158) interacts with (2E)-4-hydroxy-3-methylbut-2-enyl diphosphate. Cys186 contacts [4Fe-4S] cluster. 4 residues coordinate (2E)-4-hydroxy-3-methylbut-2-enyl diphosphate: Ser214, Ser215, Asn216, and Ser258. Dimethylallyl diphosphate contacts are provided by Ser214, Ser215, Asn216, and Ser258. Residues Ser214, Ser215, Asn216, and Ser258 each contribute to the isopentenyl diphosphate site.

This sequence belongs to the IspH family. The cofactor is [4Fe-4S] cluster.

The catalysed reaction is isopentenyl diphosphate + 2 oxidized [2Fe-2S]-[ferredoxin] + H2O = (2E)-4-hydroxy-3-methylbut-2-enyl diphosphate + 2 reduced [2Fe-2S]-[ferredoxin] + 2 H(+). It catalyses the reaction dimethylallyl diphosphate + 2 oxidized [2Fe-2S]-[ferredoxin] + H2O = (2E)-4-hydroxy-3-methylbut-2-enyl diphosphate + 2 reduced [2Fe-2S]-[ferredoxin] + 2 H(+). Its pathway is isoprenoid biosynthesis; dimethylallyl diphosphate biosynthesis; dimethylallyl diphosphate from (2E)-4-hydroxy-3-methylbutenyl diphosphate: step 1/1. The protein operates within isoprenoid biosynthesis; isopentenyl diphosphate biosynthesis via DXP pathway; isopentenyl diphosphate from 1-deoxy-D-xylulose 5-phosphate: step 6/6. Its function is as follows. Catalyzes the conversion of 1-hydroxy-2-methyl-2-(E)-butenyl 4-diphosphate (HMBPP) into a mixture of isopentenyl diphosphate (IPP) and dimethylallyl diphosphate (DMAPP). Acts in the terminal step of the DOXP/MEP pathway for isoprenoid precursor biosynthesis. The chain is 4-hydroxy-3-methylbut-2-enyl diphosphate reductase from Helicobacter pylori (strain P12).